The sequence spans 449 residues: Tubulin alpha-8 chain (449 aa).

The MREC motif signature appears at 1–4 (MREC). Residues Gln11, Glu71, Ser140, Gly144, Thr145, Thr179, Asn206, and Asn228 each coordinate GTP. Position 71 (Glu71) interacts with Mg(2+). Glu254 is an active-site residue.

It belongs to the tubulin family. As to quaternary structure, dimer of alpha and beta chains. A typical microtubule is a hollow water-filled tube with an outer diameter of 25 nm and an inner diameter of 15 nM. Alpha-beta heterodimers associate head-to-tail to form protofilaments running lengthwise along the microtubule wall with the beta-tubulin subunit facing the microtubule plus end conferring a structural polarity. Microtubules usually have 13 protofilaments but different protofilament numbers can be found in some organisms and specialized cells. It depends on Mg(2+) as a cofactor. Some glutamate residues at the C-terminus are polyglycylated, resulting in polyglycine chains on the gamma-carboxyl group. Glycylation is mainly limited to tubulin incorporated into axonemes (cilia and flagella) whereas glutamylation is prevalent in neuronal cells, centrioles, axonemes, and the mitotic spindle. Both modifications can coexist on the same protein on adjacent residues, and lowering polyglycylation levels increases polyglutamylation, and reciprocally. Cilia and flagella glycylation is required for their stability and maintenance. Flagella glycylation controls sperm motility. In terms of processing, some glutamate residues at the C-terminus are polyglutamylated, resulting in polyglutamate chains on the gamma-carboxyl group. Polyglutamylation plays a key role in microtubule severing by spastin (SPAST). SPAST preferentially recognizes and acts on microtubules decorated with short polyglutamate tails: severing activity by SPAST increases as the number of glutamates per tubulin rises from one to eight, but decreases beyond this glutamylation threshold. Glutamylation is also involved in cilia motility. Post-translationally, the C-terminal phenylalanine residue is cleaved by MATCAP1/KIAA0895L. As to expression, expressed at highest levels in the testis, followed by skeletal and heart muscle. Expressed at low levels in the developing brain.

It localises to the cytoplasm. It is found in the cytoskeleton. It catalyses the reaction GTP + H2O = GDP + phosphate + H(+). Functionally, tubulin is the major constituent of microtubules, a cylinder consisting of laterally associated linear protofilaments composed of alpha- and beta-tubulin heterodimers. Microtubules grow by the addition of GTP-tubulin dimers to the microtubule end, where a stabilizing cap forms. Below the cap, tubulin dimers are in GDP-bound state, owing to GTPase activity of alpha-tubulin. In Mus musculus (Mouse), this protein is Tubulin alpha-8 chain (Tuba8).